The primary structure comprises 217 residues: MILNILLTLTLLMGRVKSDPDPLQDYCVSPPPSSHQQIFLNGKLCKDPTQASVSDFSTSALSRPGNTKTKPFMINVTVTTTANLPGLNTVGLTMARLDFGGSGVVPPHVHPRASEVTVCLDGVLLVGFVDTSGRVFTQELHPGETFVFPKGLIHFLYNIDTVSSALAVSGLSSQNPGTQIVSLSSFISKPPFLVEVLKSAYDINGQDVARIRKSLEG.

An N-terminal signal peptide occupies residues 1–18 (MILNILLTLTLLMGRVKS). Cysteine 27 and cysteine 45 are disulfide-bonded. A Cupin type-1 domain is found at 59–209 (SALSRPGNTK…AYDINGQDVA (151 aa)). Residue asparagine 75 is glycosylated (N-linked (GlcNAc...) asparagine). Histidine 108, histidine 110, glutamate 115, and histidine 154 together coordinate Mn(2+).

It belongs to the germin family. In terms of assembly, oligomer (believed to be a pentamer but probably hexamer).

It localises to the secreted. Its subcellular location is the extracellular space. The protein localises to the apoplast. Its function is as follows. May play a role in plant defense. Probably has no oxalate oxidase activity even if the active site is conserved. This is Germin-like protein subfamily 1 member 1 (GLP7) from Arabidopsis thaliana (Mouse-ear cress).